Here is a 458-residue protein sequence, read N- to C-terminus: Bifunctional protein GlmU (458 aa).

A pyrophosphorylase region spans residues 1-229 (MNKFAIVLAA…FDESLGVNDR (229 aa)). Residues 8 to 11 (LAAG), Lys22, Gln72, and 77 to 78 (GT) each bind UDP-N-acetyl-alpha-D-glucosamine. A Mg(2+)-binding site is contributed by Asp102. The UDP-N-acetyl-alpha-D-glucosamine site is built by Gly139, Glu154, Asn169, and Asn227. Residue Asn227 coordinates Mg(2+). The tract at residues 230–250 (VALSQAEGTMRKRINHEHMVN) is linker. The interval 251–458 (GVTLIDPATT…AKKMPHYRGQ (208 aa)) is N-acetyltransferase. Residues Arg332 and Lys350 each coordinate UDP-N-acetyl-alpha-D-glucosamine. His362 (proton acceptor) is an active-site residue. Positions 365 and 376 each coordinate UDP-N-acetyl-alpha-D-glucosamine. Positions 379, 404, 422, and 439 each coordinate acetyl-CoA.

The protein in the N-terminal section; belongs to the N-acetylglucosamine-1-phosphate uridyltransferase family. This sequence in the C-terminal section; belongs to the transferase hexapeptide repeat family. In terms of assembly, homotrimer. The cofactor is Mg(2+).

It is found in the cytoplasm. It catalyses the reaction alpha-D-glucosamine 1-phosphate + acetyl-CoA = N-acetyl-alpha-D-glucosamine 1-phosphate + CoA + H(+). The enzyme catalyses N-acetyl-alpha-D-glucosamine 1-phosphate + UTP + H(+) = UDP-N-acetyl-alpha-D-glucosamine + diphosphate. It functions in the pathway nucleotide-sugar biosynthesis; UDP-N-acetyl-alpha-D-glucosamine biosynthesis; N-acetyl-alpha-D-glucosamine 1-phosphate from alpha-D-glucosamine 6-phosphate (route II): step 2/2. The protein operates within nucleotide-sugar biosynthesis; UDP-N-acetyl-alpha-D-glucosamine biosynthesis; UDP-N-acetyl-alpha-D-glucosamine from N-acetyl-alpha-D-glucosamine 1-phosphate: step 1/1. It participates in bacterial outer membrane biogenesis; LPS lipid A biosynthesis. In terms of biological role, catalyzes the last two sequential reactions in the de novo biosynthetic pathway for UDP-N-acetylglucosamine (UDP-GlcNAc). The C-terminal domain catalyzes the transfer of acetyl group from acetyl coenzyme A to glucosamine-1-phosphate (GlcN-1-P) to produce N-acetylglucosamine-1-phosphate (GlcNAc-1-P), which is converted into UDP-GlcNAc by the transfer of uridine 5-monophosphate (from uridine 5-triphosphate), a reaction catalyzed by the N-terminal domain. The polypeptide is Bifunctional protein GlmU (Lactococcus lactis subsp. cremoris (strain SK11)).